Reading from the N-terminus, the 880-residue chain is Alanine--tRNA ligase (880 aa).

Residues histidine 566, histidine 570, cysteine 668, and histidine 672 each coordinate Zn(2+).

It belongs to the class-II aminoacyl-tRNA synthetase family. Zn(2+) is required as a cofactor.

It is found in the cytoplasm. The catalysed reaction is tRNA(Ala) + L-alanine + ATP = L-alanyl-tRNA(Ala) + AMP + diphosphate. In terms of biological role, catalyzes the attachment of alanine to tRNA(Ala) in a two-step reaction: alanine is first activated by ATP to form Ala-AMP and then transferred to the acceptor end of tRNA(Ala). Also edits incorrectly charged Ser-tRNA(Ala) and Gly-tRNA(Ala) via its editing domain. The protein is Alanine--tRNA ligase of Acetivibrio thermocellus (strain ATCC 27405 / DSM 1237 / JCM 9322 / NBRC 103400 / NCIMB 10682 / NRRL B-4536 / VPI 7372) (Clostridium thermocellum).